The sequence spans 481 residues: Glycogen synthase (481 aa).

Residue K15 participates in ADP-alpha-D-glucose binding.

It belongs to the glycosyltransferase 1 family. Bacterial/plant glycogen synthase subfamily.

It catalyses the reaction [(1-&gt;4)-alpha-D-glucosyl](n) + ADP-alpha-D-glucose = [(1-&gt;4)-alpha-D-glucosyl](n+1) + ADP + H(+). Its pathway is glycan biosynthesis; glycogen biosynthesis. Its function is as follows. Synthesizes alpha-1,4-glucan chains using ADP-glucose. The chain is Glycogen synthase from Thermosipho melanesiensis (strain DSM 12029 / CIP 104789 / BI429).